A 506-amino-acid chain; its full sequence is NAD(P)H-quinone oxidoreductase subunit 2 (506 aa).

13 helical membrane-spanning segments follow: residues 14-34 (AIIPEAFILLGIVGTLLVDLA), 42-62 (WAPIICYLSIGSSLVSLALQW), 79-99 (LAIAFRAIISLSTLISLLISW), 108-128 (PIGEFAAIVLSATLGAMLLCG), 132-152 (LISVFISLETLSVASYLLSGY), 167-187 (LLVGSAAAAVYLYGSSFLYGL), 206-226 (FITSLALVFVLSTVAFKIAAV), 240-260 (PTPVVAFLSVGSKTAGFAFAI), 276-296 (LLFTILAILSMALGNVVALAQ), 302-322 (MLAYSSIGQAGFVMIGIVSGT), 330-350 (VLYLAAYLFMNLGAFSCVILF), 374-394 (LGLSLCLLSLGGLPPMLGFFG), and 409-429 (LLVIVGLVTSVISIYYYISVI).

Belongs to the complex I subunit 2 family. In terms of assembly, NDH-1 can be composed of about 15 different subunits; different subcomplexes with different compositions have been identified which probably have different functions.

The protein resides in the cellular thylakoid membrane. It carries out the reaction a plastoquinone + NADH + (n+1) H(+)(in) = a plastoquinol + NAD(+) + n H(+)(out). It catalyses the reaction a plastoquinone + NADPH + (n+1) H(+)(in) = a plastoquinol + NADP(+) + n H(+)(out). In terms of biological role, NDH-1 shuttles electrons from an unknown electron donor, via FMN and iron-sulfur (Fe-S) centers, to quinones in the respiratory and/or the photosynthetic chain. The immediate electron acceptor for the enzyme in this species is believed to be plastoquinone. Couples the redox reaction to proton translocation, and thus conserves the redox energy in a proton gradient. Cyanobacterial NDH-1 also plays a role in inorganic carbon-concentration. This is NAD(P)H-quinone oxidoreductase subunit 2 from Prochlorococcus marinus (strain AS9601).